The primary structure comprises 55 residues: MSTSRKLKSQGTRRGKNRTPHKGVKRGCSKRKYRKSSLKSRKRCDDANRNFRSHL.

Positions 1–42 (MSTSRKLKSQGTRRGKNRTPHKGVKRGCSKRKYRKSSLKSRK) are enriched in basic residues. The disordered stretch occupies residues 1 to 55 (MSTSRKLKSQGTRRGKNRTPHKGVKRGCSKRKYRKSSLKSRKRCDDANRNFRSHL). Phosphoserine is present on residues Ser-9, Ser-36, Ser-37, and Ser-40.

This sequence belongs to the nuclear transition protein 1 family. Testis.

The protein resides in the nucleus. It is found in the chromosome. Plays a key role in the replacement of histones to protamine in the elongating spermatids of mammals. In condensing spermatids, loaded onto the nucleosomes, where it promotes the recruitment and processing of protamines, which are responsible for histone eviction. The polypeptide is Spermatid nuclear transition protein 1 (TNP1) (Ovis aries (Sheep)).